The primary structure comprises 131 residues: Thrombocorticin (131 aa).

A disulfide bridge links cysteine 3 with cysteine 111. The tract at residues 28–60 (RNESVEVKDSNGNTVSRGSGSSSSGGTFTVINM) is disordered. Over residues 37-54 (SNGNTVSRGSGSSSSGGT) the composition is skewed to low complexity. The Pseudodomain-swapping motif signature appears at 117-131 (DFNDVFVLITGLVRG).

Functionally, binds to fucose and mannose in a calcium-dependent manner (in vitro). Acts as an agonist for human thrombopoietin receptor MPL (in vitro). Binding of sugar-moieties may promote the interaction with human MPL on the cell surface (in vitro). Catalyzes MPL dimerization and activation, and modulates internalization of the receptor (in vitro). Exhibits proliferation activity in murine recombinant Ba/F3 cells expressing human MPL (Ba/F3-huMPL) (in vitro). Induces phosphorylation of STAT5 in recombinant Ba/F3-huMPL cells, possibly by stimulating MPL on the cell surface to transduce signals via Jak/STAT signaling pathway (in vitro). Does not aggregate rabbit erythrocytes, indicating absent lectin-like agglutination activity (in vitro). This Corticium sp. (Marine sponge) protein is Thrombocorticin.